A 394-amino-acid polypeptide reads, in one-letter code: Muscle cell intermediate filament protein AV71 (394 aa).

Residues 1–73 (AEINLVRRRV…RVHDQEITEL (73 aa)) are coil 1B. In terms of domain architecture, IF rod spans 1 to 239 (AEINLVRRRV…KMLEGEENRA (239 aa)). The tract at residues 74-91 (QAMAARDTTPENREYFKN) is linker 12. Residues 92–239 (ELSSAIRDIR…KMLEGEENRA (148 aa)) are coil 2. The tract at residues 240–394 (GLRQLVEQVV…HIQRSSHTIN (155 aa)) is tail. An LTD domain is found at 272–389 (SRTSFQRSAK…EERASHIQRS (118 aa)).

Belongs to the intermediate filament family.

In Acanthocheilonema viteae (Filarial nematode worm), this protein is Muscle cell intermediate filament protein AV71 (AV71).